Consider the following 539-residue polypeptide: Tetracenomycin B2 monooxygenase-dioxygenase (539 aa).

Residues leucine 15, glutamate 35, glutamine 128, and leucine 152 each contribute to the FAD site. Tyrosine 231 (proton acceptor) is an active-site residue. Aspartate 313 is an FAD binding site.

The protein belongs to the PheA/TfdB FAD monooxygenase family. The cofactor is FAD.

It catalyses the reaction tetracenomycin B2 + 2 NADPH + 2 O2 + 2 H(+) = 8-demethyltetracenomycin C + 2 NADP(+) + H2O. The catalysed reaction is tetracenomycin A2 + 2 NADPH + 2 O2 + 2 H(+) = tetracenomycin C + 2 NADP(+) + H2O. It participates in antibiotic biosynthesis. Functionally, involved in the biosynthesis of elloramycin, an antitumor polyketide. In vivo, probably catalyzes the triple hydroxylation of 8-demethyltetracenomycin A2 (tetracenomycin B2) at positions C-4, C-4a and C-12a to give 8-demethyltetracenomycin C (8-DMTC). In vitro, catalyzes the triple hydroxylation of tetracenomycin A2 (TCM A2) to give tetracenomycin C (TCM C). Uses NADPH as an electron donor and requires molecular O(2). In Streptomyces olivaceus, this protein is Tetracenomycin B2 monooxygenase-dioxygenase.